A 262-amino-acid polypeptide reads, in one-letter code: Putative phosphatase HI_0003 (262 aa).

Asp9 serves as the catalytic Nucleophile. 2 residues coordinate Mg(2+): Asp9 and Asn11. Phosphate-binding positions include 43–44 (SA) and Lys189. Asp212 lines the Mg(2+) pocket. A phosphate-binding site is contributed by Asn215.

This sequence belongs to the HAD-like hydrolase superfamily. Cof family. The cofactor is Mg(2+).

This Haemophilus influenzae (strain ATCC 51907 / DSM 11121 / KW20 / Rd) protein is Putative phosphatase HI_0003.